The chain runs to 150 residues: Ribosome maturation factor RimP (150 aa).

This sequence belongs to the RimP family.

The protein resides in the cytoplasm. In terms of biological role, required for maturation of 30S ribosomal subunits. The protein is Ribosome maturation factor RimP of Acaryochloris marina (strain MBIC 11017).